Consider the following 88-residue polypeptide: Putative membrane protein insertion efficiency factor (88 aa).

A disordered region spans residues 66–88; the sequence is DFVPPKKEKNADSEHSCKAHHHH. The segment covering 69–82 has biased composition (basic and acidic residues); the sequence is PPKKEKNADSEHSC.

The protein belongs to the UPF0161 family.

The protein localises to the cell membrane. Its function is as follows. Could be involved in insertion of integral membrane proteins into the membrane. This is Putative membrane protein insertion efficiency factor from Listeria monocytogenes serotype 4b (strain CLIP80459).